The chain runs to 222 residues: Large ribosomal subunit protein bL20 (222 aa).

The protein belongs to the bacterial ribosomal protein bL20 family.

In terms of biological role, binds directly to 23S ribosomal RNA and is necessary for the in vitro assembly process of the 50S ribosomal subunit. It is not involved in the protein synthesizing functions of that subunit. This chain is Large ribosomal subunit protein bL20 (rplT), found in Paenarthrobacter aurescens (strain TC1).